A 243-amino-acid polypeptide reads, in one-letter code: 1-(5-phosphoribosyl)-5-[(5-phosphoribosylamino)methylideneamino] imidazole-4-carboxamide isomerase (243 aa).

Asp8 acts as the Proton acceptor in catalysis. Asp130 (proton donor) is an active-site residue.

Belongs to the HisA/HisF family.

The protein localises to the cytoplasm. It carries out the reaction 1-(5-phospho-beta-D-ribosyl)-5-[(5-phospho-beta-D-ribosylamino)methylideneamino]imidazole-4-carboxamide = 5-[(5-phospho-1-deoxy-D-ribulos-1-ylimino)methylamino]-1-(5-phospho-beta-D-ribosyl)imidazole-4-carboxamide. The protein operates within amino-acid biosynthesis; L-histidine biosynthesis; L-histidine from 5-phospho-alpha-D-ribose 1-diphosphate: step 4/9. The polypeptide is 1-(5-phosphoribosyl)-5-[(5-phosphoribosylamino)methylideneamino] imidazole-4-carboxamide isomerase (Saccharophagus degradans (strain 2-40 / ATCC 43961 / DSM 17024)).